The sequence spans 233 residues: 5'-methylthioadenosine/S-adenosylhomocysteine nucleosidase (233 aa).

Residue glutamate 12 is the Proton acceptor of the active site. Substrate is bound by residues glycine 78, isoleucine 152, and 173-174 (ME). Aspartate 197 acts as the Proton donor in catalysis.

The protein belongs to the PNP/UDP phosphorylase family. MtnN subfamily. In terms of assembly, homodimer.

The catalysed reaction is S-adenosyl-L-homocysteine + H2O = S-(5-deoxy-D-ribos-5-yl)-L-homocysteine + adenine. It catalyses the reaction S-methyl-5'-thioadenosine + H2O = 5-(methylsulfanyl)-D-ribose + adenine. It carries out the reaction 5'-deoxyadenosine + H2O = 5-deoxy-D-ribose + adenine. It participates in amino-acid biosynthesis; L-methionine biosynthesis via salvage pathway; S-methyl-5-thio-alpha-D-ribose 1-phosphate from S-methyl-5'-thioadenosine (hydrolase route): step 1/2. Catalyzes the irreversible cleavage of the glycosidic bond in both 5'-methylthioadenosine (MTA) and S-adenosylhomocysteine (SAH/AdoHcy) to adenine and the corresponding thioribose, 5'-methylthioribose and S-ribosylhomocysteine, respectively. Also cleaves 5'-deoxyadenosine, a toxic by-product of radical S-adenosylmethionine (SAM) enzymes, into 5-deoxyribose and adenine. Thus, is required for in vivo function of the radical SAM enzymes biotin synthase and lipoic acid synthase, that are inhibited by 5'-deoxyadenosine accumulation. This chain is 5'-methylthioadenosine/S-adenosylhomocysteine nucleosidase, found in Yersinia pestis bv. Antiqua (strain Angola).